A 192-amino-acid polypeptide reads, in one-letter code: CASP-like protein 1E1 (192 aa).

Positions 1-22 are disordered; that stretch reads MDSQNKNSVDAMDGIESRGMKE. Topologically, residues 1-29 are cytoplasmic; sequence MDSQNKNSVDAMDGIESRGMKERGGRTNS. Residues 30–50 traverse the membrane as a helical segment; that stretch reads FLVLRVLAFVLTSTAAIVHGV. The Extracellular segment spans residues 51-81; it reads NNQTETVPIQLTSSMPPLYVPVVAKWHYLSA. Asn52 carries an N-linked (GlcNAc...) asparagine glycan. Residues 82–102 form a helical membrane-spanning segment; that stretch reads FVFFVVSNAIACSYAAISVML. At 103–118 the chain is on the cytoplasmic side; it reads SFCGKKSMVPIILTLD. Residues 119–139 traverse the membrane as a helical segment; it reads LLMVALLFSSNGAATAIGVMG. Over 140–161 the chain is Extracellular; the sequence is YKGNSHVKWNKVCNVFGKFCNQ. A helical transmembrane segment spans residues 162–182; that stretch reads VAASVVLSLIGSIVFVLLVML. Over 183–192 the chain is Cytoplasmic; that stretch reads TAFRLHNKSK.

The protein belongs to the Casparian strip membrane proteins (CASP) family. As to quaternary structure, homodimer and heterodimers.

It localises to the cell membrane. This chain is CASP-like protein 1E1, found in Ricinus communis (Castor bean).